The primary structure comprises 198 residues: Recombination protein RecR (198 aa).

Residues 57–72 (CSICGNLTESDPCAIC) form a C4-type zinc finger. The Toprim domain occupies 80 to 175 (TTILVVEESK…KVTRLARGLA (96 aa)).

It belongs to the RecR family.

In terms of biological role, may play a role in DNA repair. It seems to be involved in an RecBC-independent recombinational process of DNA repair. It may act with RecF and RecO. In Lactococcus lactis subsp. cremoris (strain MG1363), this protein is Recombination protein RecR.